We begin with the raw amino-acid sequence, 249 residues long: Phosphate import ATP-binding protein PstB (249 aa).

The ABC transporter domain occupies isoleucine 4 to isoleucine 244. ATP is bound at residue glycine 36–serine 43.

The protein belongs to the ABC transporter superfamily. Phosphate importer (TC 3.A.1.7) family. The complex is composed of two ATP-binding proteins (PstB), two transmembrane proteins (PstC and PstA) and a solute-binding protein (PstS).

Its subcellular location is the cell membrane. The enzyme catalyses phosphate(out) + ATP + H2O = ADP + 2 phosphate(in) + H(+). Its function is as follows. Part of the ABC transporter complex PstSACB involved in phosphate import. Responsible for energy coupling to the transport system. In Clostridium acetobutylicum (strain ATCC 824 / DSM 792 / JCM 1419 / IAM 19013 / LMG 5710 / NBRC 13948 / NRRL B-527 / VKM B-1787 / 2291 / W), this protein is Phosphate import ATP-binding protein PstB.